The chain runs to 757 residues: Elongation factor G, mitochondrial (757 aa).

Residues 66-344 (DRMRNIGISA…VLDYLPCPME (279 aa)) enclose the tr-type G domain. GTP-binding positions include 75–82 (AHIDSGKT), 142–146 (DTPGH), and 196–199 (NKLD).

It belongs to the TRAFAC class translation factor GTPase superfamily. Classic translation factor GTPase family. EF-G/EF-2 subfamily.

Its subcellular location is the mitochondrion. The protein operates within protein biosynthesis; polypeptide chain elongation. Functionally, mitochondrial GTPase that catalyzes the GTP-dependent ribosomal translocation step during translation elongation. During this step, the ribosome changes from the pre-translocational (PRE) to the post-translocational (POST) state as the newly formed A-site-bound peptidyl-tRNA and P-site-bound deacylated tRNA move to the P and E sites, respectively. Catalyzes the coordinated movement of the two tRNA molecules, the mRNA and conformational changes in the ribosome. The sequence is that of Elongation factor G, mitochondrial from Oryza sativa subsp. japonica (Rice).